Reading from the N-terminus, the 56-residue chain is uncharacterized protein (56 aa).

This is an uncharacterized protein from Autographa californica nuclear polyhedrosis virus (AcMNPV).